A 289-amino-acid polypeptide reads, in one-letter code: N-methyltransferase FrzE (289 aa).

Belongs to the methyltransferase superfamily.

It catalyses the reaction (1S,4S)-4-[(4-hydroxyphenyl)methyl]-2,5-diazaspiro[bicyclo[3.2.1]octane-6,1'-cyclohexan]-4'-one + S-adenosyl-L-methionine = (1S,4S)-4-[(4-hydroxyphenyl)methyl]-2-methyl-2,5-diazaspiro[bicyclo[3.2.1]octane-6,1'-cyclohexan]-4'-one + S-adenosyl-L-homocysteine + H(+). The catalysed reaction is (1S,4S)-4-[(4-methoxyphenyl)methyl]-2,5-diazaspiro[bicyclo[3.2.1]octane-6,1'-cyclohexan]-4'-one + S-adenosyl-L-methionine = (1S,4S)-4-[(4-methoxyphenyl)methyl]-2-methyl-2,5-diazaspiro[bicyclo[3.2.1]octane-6,1'-cyclohexan]-4'-one + S-adenosyl-L-homocysteine + H(+). The protein operates within secondary metabolite biosynthesis. In terms of biological role, N-methyltransferase; part of the gene cluster that mediates the biosynthesis of the alkaloid (-)-FR901483, a potent immunosuppressant that shows efficacy in animal models and a probable inhibitor of purine nucleotide biosynthesis by targeting phosphoribosylpyrophosphate amidotransferase (PPAT). Within the pathway, FrzE methylates the amine at position C10'. The biosynthesis of (-)-FR901483 starts with the condensation of two L-tyrosines to yield (S,S)-dityrosyl-piperazine. This process occurs in 3 steps with the non-canonical nonribosomal peptide synthetase FrzA catalyzing the reduction of L-tyrosine into L-tyrosinal, the spontaneous condensation of 2 L-tyrosinal units, and the subsequent reduction by the NmrA-like family domain-containing oxidoreductase FrzB. The cytochrome P450 monooxygenase FrzC then performs coupling between N10 and C1' to morph the piperazine into a 1,4-diazabicyclo[3.2.1]octane spiro-fused to a 2,5-cyclohexadienone. The dienone portion is further reduced to cyclohexanone by the flavin-dependent reductase FrzD. The methyltranserases (MTs) FrzE and FrzF are then involved in the methylation at the C10' amine and the C4 phenolic oxygen, respectively. The order of the two MTs appear to be interchangeable. Cleavage of the C9-N10' bond by the dioxygenase FrzG then leads to formation of a conjugated iminium. In addition to the oxidation of C9, an additional dehydrogenation between C7 and C8 can occur to give a likely shunt product. The next biosynthetic step is the intramolecular aldol condensation catalyzed by the newly identified aldolase FrzH to yield an aza-tricyclic product with the formation of a C9-C3' bond. The short-chain dehydrogenase/reductase FrzI then produces dephospho-(-)-FR901483 that is phosphorylated at C4'-OH into (-)-FR901483 by the phosphotransferase FrzJ. The polypeptide is N-methyltransferase FrzE (Cladobotryum sp).